Here is a 371-residue protein sequence, read N- to C-terminus: UDP-N-acetylglucosamine--N-acetylmuramyl-(pentapeptide) pyrophosphoryl-undecaprenol N-acetylglucosamine transferase (371 aa).

UDP-N-acetyl-alpha-D-glucosamine-binding positions include 10–12, asparagine 124, arginine 165, serine 197, isoleucine 251, and glutamine 296; that span reads TGG.

It belongs to the glycosyltransferase 28 family. MurG subfamily.

The protein resides in the cell membrane. The catalysed reaction is di-trans,octa-cis-undecaprenyl diphospho-N-acetyl-alpha-D-muramoyl-L-alanyl-D-glutamyl-meso-2,6-diaminopimeloyl-D-alanyl-D-alanine + UDP-N-acetyl-alpha-D-glucosamine = di-trans,octa-cis-undecaprenyl diphospho-[N-acetyl-alpha-D-glucosaminyl-(1-&gt;4)]-N-acetyl-alpha-D-muramoyl-L-alanyl-D-glutamyl-meso-2,6-diaminopimeloyl-D-alanyl-D-alanine + UDP + H(+). It functions in the pathway cell wall biogenesis; peptidoglycan biosynthesis. Cell wall formation. Catalyzes the transfer of a GlcNAc subunit on undecaprenyl-pyrophosphoryl-MurNAc-pentapeptide (lipid intermediate I) to form undecaprenyl-pyrophosphoryl-MurNAc-(pentapeptide)GlcNAc (lipid intermediate II). In Carboxydothermus hydrogenoformans (strain ATCC BAA-161 / DSM 6008 / Z-2901), this protein is UDP-N-acetylglucosamine--N-acetylmuramyl-(pentapeptide) pyrophosphoryl-undecaprenol N-acetylglucosamine transferase.